The sequence spans 280 residues: Dopamine receptor-interacting protein 1 (280 aa).

As to quaternary structure, interacts with DRD1, the dopamine D1 receptor.

Could be a regulator of the dopamine receptor signaling pathway. This chain is Dopamine receptor-interacting protein 1 (DORIP1), found in Bos taurus (Bovine).